Here is a 633-residue protein sequence, read N- to C-terminus: DNA repair protein XRCC1 (633 aa).

S140 bears the Phosphoserine mark. K176 is covalently cross-linked (Glycyl lysine isopeptide (Lys-Gly) (interchain with G-Cter in SUMO1); alternate). Residue K176 forms a Glycyl lysine isopeptide (Lys-Gly) (interchain with G-Cter in SUMO2); alternate linkage. Position 198 is a phosphothreonine (T198). S199 bears the Phosphoserine mark. Phosphothreonine is present on T202. A phosphoserine mark is found at S204, S226, and S241. A compositionally biased stretch (low complexity) spans 221-231 (AASSASPVSRA). Positions 221–313 (AASSASPVSR…TEPRRPRAGP (93 aa)) are disordered. Positions 240-257 (ESPKGKRKLDLNQEEKKT) are enriched in basic and acidic residues. Phosphothreonine is present on T257. A phosphoserine mark is found at S259 and S266. Over residues 277–291 (APTRTPATAPVPARA) the composition is skewed to low complexity. T281 carries the post-translational modification Phosphothreonine. Basic and acidic residues predominate over residues 299-313 (PRGEGTEPRRPRAGP). Residues 315–403 (ELGKILQGVV…RRLPSQRYLM (89 aa)) enclose the BRCT 1 domain. S371 carries the phosphoserine; by PRKDC modification. 3 disordered regions span residues 400–462 (RYLM…AASP), 471–490 (EGVQ…DTED), and 498–536 (QKEH…DLPV). Residues S408, S409, S410, and S421 each carry the phosphoserine modification. The span at 427–443 (KLPQKQPQTKTKPTQAA) shows a compositional bias: low complexity. Residues S446 and S447 each carry the phosphoserine modification. 2 positions are modified to phosphothreonine: T453 and T457. S461 and S485 each carry phosphoserine. Residues 481–490 (GAEDSGDTED) are compositionally biased toward acidic residues. T488 is subject to Phosphothreonine. Residue S518 is modified to Phosphoserine. A phosphothreonine mark is found at T519 and T523. Residues 538–629 (ELPDFFQGKH…KLLPHQLYGV (92 aa)) enclose the BRCT 2 domain.

As to quaternary structure, homodimer. Interacts with polynucleotide kinase (PNK), DNA polymerase-beta (POLB) and DNA ligase III (LIG3). Interacts with APTX and APLF. Interacts with APEX1; the interaction is induced by SIRT1 and increases with the acetylated form of APEX1. Interacts with (poly-ADP-ribosylated) PARP1. In terms of processing, phosphorylation of Ser-371 causes dimer dissociation. Phosphorylation by CK2 promotes interaction with APTX and APLF. Sumoylated. As to expression, expressed in fibroblasts, retinal pigmented epithelial cells and lymphoblastoid cells (at protein level).

It is found in the nucleus. Its subcellular location is the chromosome. Its function is as follows. Scaffold protein involved in DNA single-strand break repair by mediating the assembly of DNA break repair protein complexes. Negatively regulates ADP-ribosyltransferase activity of PARP1 during base-excision repair in order to prevent excessive PARP1 activity. Recognizes and binds poly-ADP-ribose chains: specifically binds auto-poly-ADP-ribosylated PARP1, limiting its activity. The sequence is that of DNA repair protein XRCC1 from Homo sapiens (Human).